The primary structure comprises 261 residues: Small ribosomal subunit protein uS3 (261 aa).

One can recognise a KH type-2 domain in the interval 39–107; that stretch reads VREYLKRKLA…PVHVSIEEIR (69 aa). A disordered region spans residues 213–261; it reads QPVAEEPAADDRRPRRTPGRPDGDKPRTRTVKKVDGAADPAKRVRKAGA. A compositionally biased stretch (basic and acidic residues) spans 221–254; sequence ADDRRPRRTPGRPDGDKPRTRTVKKVDGAADPAK.

Belongs to the universal ribosomal protein uS3 family. Part of the 30S ribosomal subunit. Forms a tight complex with proteins S10 and S14.

Binds the lower part of the 30S subunit head. Binds mRNA in the 70S ribosome, positioning it for translation. This is Small ribosomal subunit protein uS3 from Dechloromonas aromatica (strain RCB).